A 275-amino-acid chain; its full sequence is Dihydroxyacetone phosphatase (275 aa).

Catalysis depends on Asp10, which acts as the Nucleophile. Residues Asp10, Asp12, and Asp206 each contribute to the Mg(2+) site. Asp12 acts as the Proton donor/acceptor in catalysis.

It belongs to the HAD-like hydrolase superfamily. As to quaternary structure, homohexamer. Mg(2+) is required as a cofactor.

The catalysed reaction is dihydroxyacetone phosphate + H2O = dihydroxyacetone + phosphate. Catalyzes dephosphorylation of dihydroxyacetone phosphate (DHAP) to produce 1,3-dihydroxyacetone (DHA). Is the main enzyme responsible for DHA production from catabolism of sugars (glucose, fructose, and sucrose) in C.glutamicum. Displays no activity toward nucleoside monophosphates (AMP, CMP, GMP, or UMP). In Corynebacterium glutamicum (strain R), this protein is Dihydroxyacetone phosphatase.